The chain runs to 1128 residues: Major DNA-binding protein (1128 aa).

The interval 1104-1128 is required for nuclear localization; it reads LGGGGQGSGGRRKRRLATVLPGLEV.

It belongs to the herpesviridae major DNA-binding protein family. As to quaternary structure, homooligomers. Forms double-helical filaments necessary for the formation of replication compartments within the host nucleus. Interacts with the origin-binding protein. Interacts with the helicase primase complex; this interaction stimulates primer synthesis activity of the helicase-primase complex. Interacts with the DNA polymerase. Interacts with the alkaline exonuclease; this interaction increases its nuclease processivity.

The protein resides in the virion tegument. Its subcellular location is the host nucleus. Plays several crucial roles in viral infection. Participates in the opening of the viral DNA origin to initiate replication by interacting with the origin-binding protein. May disrupt loops, hairpins and other secondary structures present on ssDNA to reduce and eliminate pausing of viral DNA polymerase at specific sites during elongation. Promotes viral DNA recombination by performing strand-transfer, characterized by the ability to transfer a DNA strand from a linear duplex to a complementary single-stranded DNA circle. Can also catalyze the renaturation of complementary single strands. Additionally, reorganizes the host cell nucleus, leading to the formation of prereplicative sites and replication compartments. This process is driven by the protein which can form double-helical filaments in the absence of DNA. This is Major DNA-binding protein from Homo sapiens (Human).